A 118-amino-acid chain; its full sequence is NADH-ubiquinone oxidoreductase chain 3 (118 aa).

The next 3 helical transmembrane spans lie at 1–21 (MLFFAVLGLLFFLIFFLVLVF), 59–79 (YTYFILLVFFVVFDLEVSLLL), and 86–106 (VLYKNFFSYLFFLVLLGIGFL).

Belongs to the complex I subunit 3 family.

The protein localises to the mitochondrion membrane. It catalyses the reaction a ubiquinone + NADH + 5 H(+)(in) = a ubiquinol + NAD(+) + 4 H(+)(out). Functionally, core subunit of the mitochondrial membrane respiratory chain NADH dehydrogenase (Complex I) that is believed to belong to the minimal assembly required for catalysis. Complex I functions in the transfer of electrons from NADH to the respiratory chain. The immediate electron acceptor for the enzyme is believed to be ubiquinone. The chain is NADH-ubiquinone oxidoreductase chain 3 (ND3) from Fasciola hepatica (Liver fluke).